A 507-amino-acid chain; its full sequence is ATP synthase subunit alpha, chloroplastic (507 aa).

G170–T177 serves as a coordination point for ATP.

Belongs to the ATPase alpha/beta chains family. F-type ATPases have 2 components, CF(1) - the catalytic core - and CF(0) - the membrane proton channel. CF(1) has five subunits: alpha(3), beta(3), gamma(1), delta(1), epsilon(1). CF(0) has four main subunits: a, b, b' and c.

The protein localises to the plastid. The protein resides in the chloroplast thylakoid membrane. It catalyses the reaction ATP + H2O + 4 H(+)(in) = ADP + phosphate + 5 H(+)(out). Functionally, produces ATP from ADP in the presence of a proton gradient across the membrane. The alpha chain is a regulatory subunit. In Atropa belladonna (Belladonna), this protein is ATP synthase subunit alpha, chloroplastic.